Here is a 571-residue protein sequence, read N- to C-terminus: Vesicle-associated protein 1-4 (571 aa).

An MSP 1 domain is found at 1–126; it reads MSTDELLTFD…EETIFKIIYV (126 aa). The interval 132-154 is disordered; it reads QSPVQEGLEDGSSPSASVSDKGN. The span at 143–153 shows a compositional bias: polar residues; the sequence is SSPSASVSDKG. The 121-residue stretch at 176–296 folds into the MSP 2 domain; sequence LLIIDPVDVQ…EETRLKVMYV (121 aa). The segment at 297–322 is disordered; sequence TPPQPPSPVQEGTEEGSSPRASVSDN. Positions 311–322 are enriched in polar residues; sequence EGSSPRASVSDN. The region spanning 356 to 493 is the TIR domain; that stretch reads PQYQVFINFR…KWKEALSSVF (138 aa). Residue Glu-430 is part of the active site.

Belongs to the VAMP-associated protein (VAP) (TC 9.B.17) family.

The enzyme catalyses NAD(+) + H2O = ADP-D-ribose + nicotinamide + H(+). Functionally, may play a role in vesicle trafficking. In Arabidopsis thaliana (Mouse-ear cress), this protein is Vesicle-associated protein 1-4 (PVA14).